A 104-amino-acid polypeptide reads, in one-letter code: Succinate dehydrogenase assembly factor 4, mitochondrial (104 aa).

Residues 1–30 (MVSTTLSVSRMTFVWRAARPSLLNHSLRKM) constitute a mitochondrion transit peptide. Residues 29–104 (KMSYQEGKPE…WERKGRCIDF (76 aa)) form a disordered region. 2 stretches are compositionally biased toward basic and acidic residues: residues 63 to 83 (EREPLQKFPDDVNPVTKEKGG) and 91 to 104 (RYGDWERKGRCIDF).

The protein belongs to the SDHAF4 family. In terms of assembly, interacts with Sdha in its FAD-bound form.

It localises to the mitochondrion matrix. Its function is as follows. Plays an essential role in the assembly of succinate dehydrogenase (SDH), an enzyme complex (also referred to as respiratory complex II) that is a component of both the tricarboxylic acid (TCA) cycle and the mitochondrial electron transport chain, and which couples the oxidation of succinate to fumarate with the reduction of ubiquinone (coenzyme Q) to ubiquinol. Binds to the flavoprotein subunit Sdha in its FAD-bound form, blocking the generation of excess reactive oxygen species (ROS) and facilitating its assembly with the iron-sulfur protein subunit Sdhb into the SDH catalytic dimer. This Mus musculus (Mouse) protein is Succinate dehydrogenase assembly factor 4, mitochondrial.